We begin with the raw amino-acid sequence, 194 residues long: Histone H1.0 (194 aa).

Met1 is subject to N-acetylmethionine. Residues 1–11 (MTENSTSAPAA) show a composition bias toward low complexity. The disordered stretch occupies residues 1 to 29 (MTENSTSAPAAKPKRAKASKKSTDHPKYS). At Thr2 the chain carries N-acetylthreonine; partial; in Histone H1.0, N-terminally processed. A Deamidated asparagine; partial modification is found at Asn4. The H15 domain occupies 24-97 (DHPKYSDMIV…GASGSFRLAK (74 aa)). Arg42 is modified (citrulline). The segment at 84–194 (TKGVGASGSF…SSAKRAGKKK (111 aa)) is disordered. Ser104 bears the ADP-ribosylserine mark. Residues 105–194 (VAFKKTKKEI…SSAKRAGKKK (90 aa)) show a composition bias toward basic residues.

It belongs to the histone H1/H5 family. Post-translationally, phosphorylated on Ser-17 in RNA edited version. ADP-ribosylated on Ser-104 in response to DNA damage.

It is found in the nucleus. The protein localises to the chromosome. Its function is as follows. Histones H1 are necessary for the condensation of nucleosome chains into higher-order structures. The histones H1.0 are found in cells that are in terminal stages of differentiation or that have low rates of cell division. In Homo sapiens (Human), this protein is Histone H1.0.